Consider the following 236-residue polypeptide: MGRKSVRAKEKKQKRLEERAAMAAVCAKVQAANQLGDPLGAFPVFKKFDRNGLNLSIECCKVSDLDQKTIDWAFELTKTNMQLLYEQSEWGWKEREKREELTDERAWYLIARDELAALVAFVHFRFDVECGDEVLYCYEVQLETRVRRKGVGKFLVQILQLMANSTQMKKVVLTVFKHNHGAYQFFRDALQFEIDETSPSVSGCCSDDCTYEILSKRTKFGDTPHSHTGHCAGCCH.

Residue glycine 2 is the site of N-myristoyl glycine attachment. In terms of domain architecture, N-acetyltransferase spans 63–217 (SDLDQKTIDW…DCTYEILSKR (155 aa)). Substrate-binding positions include tyrosine 85, 127–129 (DVE), and tyrosine 138. Residues 140–142 (VQL) and 148–153 (RKGVGK) contribute to the acetyl-CoA site. Threonine 174 lines the substrate pocket. Asparagine 179 contacts acetyl-CoA. Position 211 (tyrosine 211) interacts with substrate.

It belongs to the acetyltransferase family. NAA40 subfamily.

It is found in the cytoplasm. It localises to the nucleus. It carries out the reaction N-terminal L-seryl-[histone H4] + acetyl-CoA = N-terminal N(alpha)-acetyl-L-seryl-[histone H4] + CoA + H(+). It catalyses the reaction N-terminal L-seryl-[histone H2A] + acetyl-CoA = N-terminal N(alpha)-acetyl-L-seryl-[histone H2A] + CoA + H(+). In terms of biological role, N-alpha-acetyltransferase that specifically mediates the acetylation of the N-terminal residues of histones H4 and H2A. In contrast to other N-alpha-acetyltransferase, has a very specific selectivity for histones H4 and H2A N-terminus and specifically recognizes the 'Ser-Gly-Arg-Gly sequence'. The protein is N-alpha-acetyltransferase 40 (naa40) of Xenopus laevis (African clawed frog).